The sequence spans 137 residues: Small ribosomal subunit protein uS9c (137 aa).

The tract at residues 106 to 137 is disordered; that stretch reads KSEGYLTRDPRVKERKKYGLKKARKAPQFSKR. Residues 118–137 show a composition bias toward basic residues; sequence KERKKYGLKKARKAPQFSKR.

This sequence belongs to the universal ribosomal protein uS9 family.

It is found in the plastid. The protein resides in the chloroplast. The chain is Small ribosomal subunit protein uS9c (rps9) from Pyropia yezoensis (Susabi-nori).